The following is a 311-amino-acid chain: MTDMSAAYVEAFLEMMSAERGAAANTLQSYERDLEDARSFLRSRGTGLTDASADDLRSYLSHLAGQGFKASSQARRLSALRQFYKFLYAEGLRTDDPTGILDAPKKARTLPKTLSIEDVTRLIGQAEAEAKSGSDDVMAKLRMHALIELLYATGMRVSELVSLPASVLAQNGRFLIIRGKGNKERLVPLSQAAIRAMRAYGEALQEESADSPWLFPSNGKSGHLPRQVFARDLKSLAARAGIRVAAISPHVLRHAFASHLLANGADLRAVQELLGHSDISTTQIYTHVLEERLHDLVQNHHPLAKQAKKQD.

The Core-binding (CB) domain occupies 3-88 (DMSAAYVEAF…ALRQFYKFLY (86 aa)). One can recognise a Tyr recombinase domain in the interval 109–298 (TLPKTLSIED…LEERLHDLVQ (190 aa)). Residues Arg156, Lys180, His250, Arg253, and His276 contribute to the active site. Catalysis depends on Tyr285, which acts as the O-(3'-phospho-DNA)-tyrosine intermediate.

This sequence belongs to the 'phage' integrase family. XerD subfamily. Forms a cyclic heterotetrameric complex composed of two molecules of XerC and two molecules of XerD.

The protein resides in the cytoplasm. Its function is as follows. Site-specific tyrosine recombinase, which acts by catalyzing the cutting and rejoining of the recombining DNA molecules. The XerC-XerD complex is essential to convert dimers of the bacterial chromosome into monomers to permit their segregation at cell division. It also contributes to the segregational stability of plasmids. In Rhizobium meliloti (strain 1021) (Ensifer meliloti), this protein is Tyrosine recombinase XerD.